The primary structure comprises 99 residues: Large ribosomal subunit protein eL21 (99 aa).

It belongs to the eukaryotic ribosomal protein eL21 family.

The sequence is that of Large ribosomal subunit protein eL21 from Ignicoccus hospitalis (strain KIN4/I / DSM 18386 / JCM 14125).